The chain runs to 522 residues: Glutamate--cysteine ligase (522 aa).

It belongs to the glutamate--cysteine ligase type 1 family. Type 1 subfamily.

It carries out the reaction L-cysteine + L-glutamate + ATP = gamma-L-glutamyl-L-cysteine + ADP + phosphate + H(+). The protein operates within sulfur metabolism; glutathione biosynthesis; glutathione from L-cysteine and L-glutamate: step 1/2. This is Glutamate--cysteine ligase from Vibrio campbellii (strain ATCC BAA-1116).